Consider the following 103-residue polypeptide: Large ribosomal subunit protein eL14 (103 aa).

Belongs to the eukaryotic ribosomal protein eL14 family.

In Pyrobaculum calidifontis (strain DSM 21063 / JCM 11548 / VA1), this protein is Large ribosomal subunit protein eL14.